We begin with the raw amino-acid sequence, 122 residues long: Neuropeptide B (122 aa).

A signal peptide spans 1-24 (MAGPAMLVAAALALCLLLASPGLA). At W25 the chain carries 6'-bromotryptophan. Residues 56-122 (SEPRGGTRSL…LSLSASDCRK (67 aa)) constitute a propeptide that is removed on maturation.

This sequence belongs to the neuropeptide B/W family.

The protein resides in the secreted. Its function is as follows. May be involved in the regulation of feeding, neuroendocrine system, memory, learning and in the afferent pain pathway. This is Neuropeptide B (NPB) from Bos taurus (Bovine).